The chain runs to 467 residues: Uronate isomerase (467 aa).

It belongs to the metallo-dependent hydrolases superfamily. Uronate isomerase family.

The catalysed reaction is D-glucuronate = D-fructuronate. It carries out the reaction aldehydo-D-galacturonate = keto-D-tagaturonate. It functions in the pathway carbohydrate metabolism; pentose and glucuronate interconversion. The polypeptide is Uronate isomerase (Clostridium acetobutylicum (strain ATCC 824 / DSM 792 / JCM 1419 / IAM 19013 / LMG 5710 / NBRC 13948 / NRRL B-527 / VKM B-1787 / 2291 / W)).